The primary structure comprises 1544 residues: Transcriptional activator GLI3 (1544 aa).

Polar residues-rich tracts occupy residues methionine 1–threonine 10 and asparagine 402–glycine 429. Disordered regions lie at residues methionine 1–alanine 83 and serine 373–glutamate 477. A compositionally biased stretch (basic and acidic residues) spans valine 463–proline 476. The C2H2-type 1 zinc-finger motif lies at threonine 482–histidine 509. The C2H2-type 2; degenerate zinc finger occupies leucine 520 to histidine 542. 3 C2H2-type zinc fingers span residues histidine 548–histidine 572, tyrosine 578–histidine 603, and tyrosine 609–histidine 634. Disordered stretches follow at residues aspartate 622–asparagine 728, arginine 865–serine 919, serine 1126–serine 1155, and histidine 1327–serine 1368. The span at histidine 634–proline 650 shows a compositional bias: basic and acidic residues. The span at serine 660–threonine 685 shows a compositional bias: polar residues. The segment covering serine 686–lysine 701 has biased composition (basic and acidic residues). Residues proline 702–asparagine 728 show a composition bias toward polar residues. Low complexity predominate over residues arginine 865–serine 882. Residues glycine 1330 to glutamine 1355 are compositionally biased toward polar residues.

Belongs to the GLI C2H2-type zinc-finger protein family. In terms of processing, phosphorylation is essential for its proteolytic processing. The repressor form (GLI3R), a C-terminally truncated form is generated from the full-length GLI3 protein (GLI3FL) through proteolytic processing.

It localises to the nucleus. The protein resides in the cytoplasm. Has a dual function as a transcriptional activator and a repressor of the sonic hedgehog (Shh) pathway, and plays a role in limb development. The full-length GLI3 form (GLI3FL) acts as an activator (GLI3A) while GLI3R, its C-terminally truncated form, acts as a repressor. The chain is Transcriptional activator GLI3 (GLI3) from Gallus gallus (Chicken).